The chain runs to 141 residues: ATP synthase epsilon chain (141 aa).

This sequence belongs to the ATPase epsilon chain family. In terms of assembly, F-type ATPases have 2 components, CF(1) - the catalytic core - and CF(0) - the membrane proton channel. CF(1) has five subunits: alpha(3), beta(3), gamma(1), delta(1), epsilon(1). CF(0) has three main subunits: a, b and c.

The protein localises to the cell inner membrane. Its function is as follows. Produces ATP from ADP in the presence of a proton gradient across the membrane. This Bordetella avium (strain 197N) protein is ATP synthase epsilon chain.